A 184-amino-acid polypeptide reads, in one-letter code: Nutrient stress-induced DNA-binding protein (184 aa).

It belongs to the Dps family. As to quaternary structure, hexamer.

Functionally, involved in protection of chromosomal DNA from damage under nutrient-limited and oxidative stress conditions. Binds heme. This is Nutrient stress-induced DNA-binding protein (dpsA) from Nostoc sp. (strain PCC 7120 / SAG 25.82 / UTEX 2576).